A 518-amino-acid chain; its full sequence is Integrator complex subunit 14 (518 aa).

The VWFA domain occupies 2-204 (PTVVVMDVSL…KNVQSMFGKL (203 aa)). Residues Ser-10, Ser-12, and Thr-86 each coordinate Mg(2+). The segment at 373-394 (SDAKENPYGDDDNKSPFPLQPK) is disordered. Residues 374-386 (DAKENPYGDDDNK) are compositionally biased toward basic and acidic residues.

It belongs to the Integrator subunit 14 family. Component of the Integrator complex, composed of core subunits INTS1, INTS2, INTS3, INTS4, INTS5, INTS6, INTS7, INTS8, INTS9/RC74, INTS10, INTS11/CPSF3L, INTS12, INTS13, INTS14 and INTS15. The core complex associates with protein phosphatase 2A subunits PPP2CA and PPP2R1A, to form the Integrator-PP2A (INTAC) complex. INTS14 is part of the tail subcomplex, composed of INTS10, INTS13, INTS14 and INTS15.

It is found in the nucleus. Its function is as follows. Component of the integrator complex, a multiprotein complex that terminates RNA polymerase II (Pol II) transcription in the promoter-proximal region of genes. The integrator complex provides a quality checkpoint during transcription elongation by driving premature transcription termination of transcripts that are unfavorably configured for transcriptional elongation: the complex terminates transcription by (1) catalyzing dephosphorylation of the C-terminal domain (CTD) of Pol II subunit POLR2A/RPB1 and SUPT5H/SPT5, (2) degrading the exiting nascent RNA transcript via endonuclease activity and (3) promoting the release of Pol II from bound DNA. The integrator complex is also involved in terminating the synthesis of non-coding Pol II transcripts, such as enhancer RNAs (eRNAs), small nuclear RNAs (snRNAs), telomerase RNAs and long non-coding RNAs (lncRNAs). Within the integrator complex, INTS14 is part of the integrator tail module that acts as a platform for the recruitment of transcription factors at promoters. The protein is Integrator complex subunit 14 of Gallus gallus (Chicken).